A 210-amino-acid polypeptide reads, in one-letter code: Cdc42 effector protein 2 (210 aa).

S2 carries the post-translational modification N-acetylserine. A CRIB domain is found at 30–44 (ISPPLGDFRHTIHIG). Residues S31, S101, and S141 each carry the phosphoserine modification. The tract at residues 122 to 171 (PTAQAPPKPPRLHLETPQPSPQEGGSVDIWRIPETGSPNSGLTPESGAEE) is disordered.

The protein belongs to the BORG/CEP family. As to quaternary structure, interacts with RHOQ and CDC42 in a GTP-dependent manner, and with SEPT7. In terms of tissue distribution, highly expressed in the heart. Weakly expressed in the pancreas and liver.

The protein localises to the endomembrane system. It localises to the cytoplasm. Its subcellular location is the cytoskeleton. Probably involved in the organization of the actin cytoskeleton. May act downstream of CDC42 to induce actin filament assembly leading to cell shape changes. Induces pseudopodia formation in fibroblasts in a CDC42-dependent manner. The chain is Cdc42 effector protein 2 (CDC42EP2) from Homo sapiens (Human).